The following is a 385-amino-acid chain: Lipid-A-disaccharide synthase (385 aa).

It belongs to the LpxB family.

It catalyses the reaction a lipid X + a UDP-2-N,3-O-bis[(3R)-3-hydroxyacyl]-alpha-D-glucosamine = a lipid A disaccharide + UDP + H(+). It functions in the pathway bacterial outer membrane biogenesis; LPS lipid A biosynthesis. Condensation of UDP-2,3-diacylglucosamine and 2,3-diacylglucosamine-1-phosphate to form lipid A disaccharide, a precursor of lipid A, a phosphorylated glycolipid that anchors the lipopolysaccharide to the outer membrane of the cell. The polypeptide is Lipid-A-disaccharide synthase (Xylella fastidiosa (strain M23)).